The sequence spans 362 residues: Chorismate synthase (362 aa).

NADP(+) is bound by residues Arg48 and Arg54. FMN contacts are provided by residues 125–127 (RSS), 238–239 (NA), Gly278, 293–297 (KPTSS), and Arg319.

This sequence belongs to the chorismate synthase family. In terms of assembly, homotetramer. Requires FMNH2 as cofactor.

The enzyme catalyses 5-O-(1-carboxyvinyl)-3-phosphoshikimate = chorismate + phosphate. It functions in the pathway metabolic intermediate biosynthesis; chorismate biosynthesis; chorismate from D-erythrose 4-phosphate and phosphoenolpyruvate: step 7/7. Functionally, catalyzes the anti-1,4-elimination of the C-3 phosphate and the C-6 proR hydrogen from 5-enolpyruvylshikimate-3-phosphate (EPSP) to yield chorismate, which is the branch point compound that serves as the starting substrate for the three terminal pathways of aromatic amino acid biosynthesis. This reaction introduces a second double bond into the aromatic ring system. In Aeromonas salmonicida (strain A449), this protein is Chorismate synthase.